The primary structure comprises 918 residues: Isoleucine--tRNA ligase (918 aa).

A 'HIGH' region motif is present at residues 57–67 (PYANGHIHIGT). Position 552 (E552) interacts with L-isoleucyl-5'-AMP. The 'KMSKS' region signature appears at 593-597 (KMSKS). K596 contributes to the ATP binding site. Positions 886, 889, 906, and 909 each coordinate Zn(2+).

This sequence belongs to the class-I aminoacyl-tRNA synthetase family. IleS type 1 subfamily. Monomer. It depends on Zn(2+) as a cofactor.

It localises to the cytoplasm. It carries out the reaction tRNA(Ile) + L-isoleucine + ATP = L-isoleucyl-tRNA(Ile) + AMP + diphosphate. Functionally, catalyzes the attachment of isoleucine to tRNA(Ile). As IleRS can inadvertently accommodate and process structurally similar amino acids such as valine, to avoid such errors it has two additional distinct tRNA(Ile)-dependent editing activities. One activity is designated as 'pretransfer' editing and involves the hydrolysis of activated Val-AMP. The other activity is designated 'posttransfer' editing and involves deacylation of mischarged Val-tRNA(Ile). In Thermotoga neapolitana (strain ATCC 49049 / DSM 4359 / NBRC 107923 / NS-E), this protein is Isoleucine--tRNA ligase.